A 152-amino-acid chain; its full sequence is Arginine repressor (152 aa).

Belongs to the ArgR family.

It localises to the cytoplasm. It participates in amino-acid biosynthesis; L-arginine biosynthesis [regulation]. Functionally, regulates arginine biosynthesis genes. This is Arginine repressor from Lactiplantibacillus plantarum (strain ATCC BAA-793 / NCIMB 8826 / WCFS1) (Lactobacillus plantarum).